The chain runs to 505 residues: MSDLPPTDSNAPPYSVSELAFALKRTLEDRYGFVRLRGELSKVTHHSNGHVYLTIKDDKSAIDGVVWKGNVRGLGVRPEHGLEVIVTGKITTYPAGSRYQIVIDSMEAAGVGALLAQLERLKAKLAAEGLFAPERKRPLPSMPAVVGVITSPTGAVIRDILHRIRDRWPCQVLVWPCVVQGDAAAGQVSAAIRGFNAIQPGGPVPRPDVLIVARGGGSVEDLWAFNDEGLARTVAEGTIPLISAVGHETDTTLIDFVSDRRAPTPTAAAEMATPVLAELRALISDLDRRLNRCGARTIEERRTRLVSAARGLPRPNDLLALAQQRFDIASGRLDAALDRNTTVHAQSLLKVTARLTPEALGRQRAVKAERLADLSRRLDLAARRAPDRVAQHARLPALWDRLNAAGQRRLQRDADRLENLEKLRQSLNPERPLELGFALVRKGDGTLARSAADLVSGERVNLKFKSGDRDAVIDGEGGPAPAPTAPAPKPRPKPAAPPAGQGDLF.

Residues 466–505 (SGDRDAVIDGEGGPAPAPTAPAPKPRPKPAAPPAGQGDLF) form a disordered region. The segment covering 480–497 (APAPTAPAPKPRPKPAAP) has biased composition (pro residues).

The protein belongs to the XseA family. In terms of assembly, heterooligomer composed of large and small subunits.

It localises to the cytoplasm. The catalysed reaction is Exonucleolytic cleavage in either 5'- to 3'- or 3'- to 5'-direction to yield nucleoside 5'-phosphates.. Functionally, bidirectionally degrades single-stranded DNA into large acid-insoluble oligonucleotides, which are then degraded further into small acid-soluble oligonucleotides. The polypeptide is Exodeoxyribonuclease 7 large subunit (Caulobacter vibrioides (strain NA1000 / CB15N) (Caulobacter crescentus)).